The chain runs to 260 residues: Flavin-dependent thymidylate synthase (260 aa).

Residues 2–203 (ISVKLVSYTN…PRLFKYTGPN (202 aa)) form the ThyX domain. Residues Ser-56, 80 to 82 (RHR), and Gln-88 each bind FAD. Residues 77-80 (QLVR), 88-92 (QMSHR), and Arg-142 each bind dUMP. Residues 80–90 (RHRIASYTQMS) carry the ThyX motif motif. Residues 158 to 160 (NAR) and Asn-164 contribute to the FAD site. Position 169 (Arg-169) interacts with dUMP. Arg-169 acts as the Involved in ionization of N3 of dUMP, leading to its activation in catalysis.

This sequence belongs to the thymidylate synthase ThyX family. As to quaternary structure, homotetramer. The cofactor is FAD.

The enzyme catalyses dUMP + (6R)-5,10-methylene-5,6,7,8-tetrahydrofolate + NADPH + H(+) = dTMP + (6S)-5,6,7,8-tetrahydrofolate + NADP(+). It participates in pyrimidine metabolism; dTTP biosynthesis. Functionally, catalyzes the reductive methylation of 2'-deoxyuridine-5'-monophosphate (dUMP) to 2'-deoxythymidine-5'-monophosphate (dTMP) while utilizing 5,10-methylenetetrahydrofolate (mTHF) as the methyl donor, and NADPH and FADH(2) as the reductant. This is Flavin-dependent thymidylate synthase from Saccharolobus solfataricus (strain ATCC 35092 / DSM 1617 / JCM 11322 / P2) (Sulfolobus solfataricus).